A 506-amino-acid chain; its full sequence is Probable alpha-L-arabinofuranosidase B (506 aa).

Positions 1–26 (MLPQLSIERASVFALGLIATGSLVVA) are cleaved as a signal peptide. The catalytic stretch occupies residues 27-343 (GPCDIYSAGG…ANIVAAKYAT (317 aa)). Cystine bridges form between Cys-29/Cys-39, Cys-89/Cys-94, and Cys-184/Cys-185. Residue Asp-227 participates in substrate binding. Residue Glu-229 is the Nucleophile of the active site. Asn-230 serves as a coordination point for substrate. Asn-240 is a glycosylation site (N-linked (GlcNAc...) asparagine). Gly-304 contributes to the substrate binding site. Catalysis depends on Asp-305, which acts as the Proton donor. An ABD region spans residues 344-506 (ASLTSGPKLT…VSWVISTGFA (163 aa)). Cys-409 and Cys-447 are joined by a disulfide. 7 residues coordinate substrate: His-424, Asn-426, Phe-427, Asp-443, His-471, Leu-476, and Asp-496.

Belongs to the glycosyl hydrolase 54 family.

Its subcellular location is the secreted. It carries out the reaction Hydrolysis of terminal non-reducing alpha-L-arabinofuranoside residues in alpha-L-arabinosides.. It participates in glycan metabolism; L-arabinan degradation. Functionally, alpha-L-arabinofuranosidase involved in the degradation of arabinoxylan, a major component of plant hemicellulose. Able to hydrolyze 1,5-, 1,3- and 1,2-alpha-linkages not only in L-arabinofuranosyl oligosaccharides, but also in polysaccharides containing terminal non-reducing L-arabinofuranoses in side chains, like L-arabinan, arabinogalactan and arabinoxylan. This chain is Probable alpha-L-arabinofuranosidase B (abfB), found in Aspergillus fumigatus (strain ATCC MYA-4609 / CBS 101355 / FGSC A1100 / Af293) (Neosartorya fumigata).